The following is a 158-amino-acid chain: MTTLKPGDIAPKFILPNCIDKSIKLSDFLGKKVLVYFYPKAMTPGCTVQACNIRDNLELFKSKKVEVLGISPDNTNKLLTFVEKKMLNFTLLSDKQNIVSKKFGVWGEKIFMGKKYFGIYRTSFLINSSGFIDKIFFKFKCKDHHKIILTYLNSKKSD.

Residues 4 to 157 (LKPGDIAPKF…ILTYLNSKKS (154 aa)) form the Thioredoxin domain. Residue Cys-46 is the Cysteine sulfenic acid (-SOH) intermediate of the active site. A disulfide bridge connects residues Cys-46 and Cys-51.

This sequence belongs to the peroxiredoxin family. BCP/PrxQ subfamily. Monomer.

The enzyme catalyses a hydroperoxide + [thioredoxin]-dithiol = an alcohol + [thioredoxin]-disulfide + H2O. Its function is as follows. Thiol-specific peroxidase that catalyzes the reduction of hydrogen peroxide and organic hydroperoxides to water and alcohols, respectively. Plays a role in cell protection against oxidative stress by detoxifying peroxides and as sensor of hydrogen peroxide-mediated signaling events. This chain is Putative peroxiredoxin bcp (bcp), found in Buchnera aphidicola subsp. Schizaphis graminum (strain Sg).